A 134-amino-acid chain; its full sequence is Small ribosomal subunit protein uS9c (134 aa).

It belongs to the universal ribosomal protein uS9 family.

The protein localises to the plastid. Its subcellular location is the chloroplast. The chain is Small ribosomal subunit protein uS9c (rps9) from Thalassiosira pseudonana (Marine diatom).